The chain runs to 518 residues: 2-isopropylmalate synthase (518 aa).

Positions 5–267 constitute a Pyruvate carboxyltransferase domain; that stretch reads VIIFDTTLRD…STKIKHKEIY (263 aa). Residues Asp14, His202, His204, and Asn238 each contribute to the Mn(2+) site. The segment at 392-518 is regulatory domain; it reads SLSFFSVQSI…KLKKLKKINN (127 aa).

The protein belongs to the alpha-IPM synthase/homocitrate synthase family. LeuA type 1 subfamily. As to quaternary structure, homodimer. Requires Mn(2+) as cofactor.

Its subcellular location is the cytoplasm. The catalysed reaction is 3-methyl-2-oxobutanoate + acetyl-CoA + H2O = (2S)-2-isopropylmalate + CoA + H(+). It participates in amino-acid biosynthesis; L-leucine biosynthesis; L-leucine from 3-methyl-2-oxobutanoate: step 1/4. Catalyzes the condensation of the acetyl group of acetyl-CoA with 3-methyl-2-oxobutanoate (2-ketoisovalerate) to form 3-carboxy-3-hydroxy-4-methylpentanoate (2-isopropylmalate). This chain is 2-isopropylmalate synthase, found in Buchnera aphidicola subsp. Rhopalosiphum padi.